The following is a 173-amino-acid chain: MRVDIVPVGDVPAHVKRQASSSLRSVYDCEVVVASEQDVPTAAYDEARSQYRAAEFIDTATRATSGDKTIAITPHDLFYRRRNYVFGLAYLDGRGCVVSTYRLQTSSDGGFSNRSSSDVFDDRVRKEVVHELGHTLGLEHCDNNRCAMNFSPTVREVDRKEENLCGSCQRTVF.

Residue H130 coordinates Zn(2+). E131 (proton acceptor) is an active-site residue. 6 residues coordinate Zn(2+): H134, H140, C141, C146, C165, and C168.

Belongs to the peptidase M54 family. Monomer. Zn(2+) is required as a cofactor.

In terms of biological role, probable zinc metalloprotease whose natural substrate is unknown. This chain is Archaemetzincin, found in Halobacterium salinarum (strain ATCC 29341 / DSM 671 / R1).